A 501-amino-acid chain; its full sequence is Glucose-6-phosphate isomerase (501 aa).

Positions 78 to 101 are disordered; it reads GIANPTENRAAEHSAERGDGAPES. Residues 86–97 show a composition bias toward basic and acidic residues; the sequence is RAAEHSAERGDG. The Proton donor role is filled by Glu333. Catalysis depends on residues His364 and Lys474.

Belongs to the GPI family.

The protein resides in the cytoplasm. The catalysed reaction is alpha-D-glucose 6-phosphate = beta-D-fructose 6-phosphate. Its pathway is carbohydrate biosynthesis; gluconeogenesis. It functions in the pathway carbohydrate degradation; glycolysis; D-glyceraldehyde 3-phosphate and glycerone phosphate from D-glucose: step 2/4. In terms of biological role, catalyzes the reversible isomerization of glucose-6-phosphate to fructose-6-phosphate. This chain is Glucose-6-phosphate isomerase, found in Sphingopyxis alaskensis (strain DSM 13593 / LMG 18877 / RB2256) (Sphingomonas alaskensis).